The following is a 158-amino-acid chain: Ankyrin repeat domain-containing protein 37 (158 aa).

ANK repeat units lie at residues 1–25 (MLLL…SVNA), 30–59 (CEQS…DLNQ), and 63–92 (FGEA…QIDL). Residues 129–149 (EQPNKDHCVQVLRLKRSFGSE) carry the Nuclear localization signal motif.

Post-translationally, ubiquitinated by the CRL2(FEM1B) complex, leading to its degradation.

It is found in the nucleus. It localises to the cytoplasm. The chain is Ankyrin repeat domain-containing protein 37 (ANKRD37) from Bos taurus (Bovine).